Reading from the N-terminus, the 858-residue chain is Receptor-like protein kinase ANXUR2 (858 aa).

Residues 1-27 (MNEKLRILFSFLCFFYVLLVSPSQSNG) form the signal peptide. Residues 28-431 (QDISLSCGAS…VKKDFQGDKR (404 aa)) are Extracellular-facing. Residues Asn133, Asn293, Asn303, and Asn331 are each glycosylated (N-linked (GlcNAc...) asparagine). A helical transmembrane segment spans residues 432–452 (ITAFVIGSAGGVAAVLFCALC). Residues 453 to 858 (FTMYQRKRKF…FSQIVNPKGR (406 aa)) are Cytoplasmic-facing. Residues 521 to 794 (FDESNVIGVG…GDVLWNLEFA (274 aa)) form the Protein kinase domain. ATP-binding positions include 527–535 (IGVGGFGKV) and Lys549. Asp645 functions as the Proton acceptor in the catalytic mechanism. The disordered stretch occupies residues 800 to 858 (TADGSRHRTPSNGGGSVDLGGGGGGVTVNISAGESDLGDDLSSEENSGIFSQIVNPKGR). The segment covering 811–825 (NGGGSVDLGGGGGGV) has biased composition (gly residues). Positions 843–858 (EENSGIFSQIVNPKGR) are enriched in polar residues.

It belongs to the protein kinase superfamily. Ser/Thr protein kinase family. In terms of tissue distribution, expressed in pollen, but not in pistils or seedlings.

The protein resides in the cell membrane. The enzyme catalyses L-seryl-[protein] + ATP = O-phospho-L-seryl-[protein] + ADP + H(+). It carries out the reaction L-threonyl-[protein] + ATP = O-phospho-L-threonyl-[protein] + ADP + H(+). Functionally, receptor-like protein kinase that controls pollen tube behavior by directing rupture at proper timing to release the sperm cell. In Arabidopsis thaliana (Mouse-ear cress), this protein is Receptor-like protein kinase ANXUR2 (ANX2).